A 175-amino-acid polypeptide reads, in one-letter code: Small ribosomal subunit protein uS5 (175 aa).

Residues 19–82 (WVDRLVSVNR…DDAKKNVIRV (64 aa)) form the S5 DRBM domain.

This sequence belongs to the universal ribosomal protein uS5 family. In terms of assembly, part of the 30S ribosomal subunit. Contacts proteins S4 and S8.

With S4 and S12 plays an important role in translational accuracy. Functionally, located at the back of the 30S subunit body where it stabilizes the conformation of the head with respect to the body. The protein is Small ribosomal subunit protein uS5 of Salinibacter ruber (strain DSM 13855 / M31).